The primary structure comprises 813 residues: Protein tramtrack, alpha isoform (813 aa).

The BTB domain occupies 33–98 (TDVTLAVEGQ…MYRGEVSVDQ (66 aa)). Disordered regions lie at residues 118–148 (EVNDDKPSPAAAAAGAGATGSESTATTPQLQ), 171–324 (ANAG…GPSE), 356–428 (TTPA…MPKK), and 526–585 (AGLP…LDDQ). The segment covering 125 to 145 (SPAAAAAGAGATGSESTATTP) has biased composition (low complexity). A compositionally biased stretch (polar residues) spans 176–187 (TPTLPVQPSLLS). Basic residues predominate over residues 192–201 (PKRKRGRPRK). Ser203, Ser205, and Ser206 each carry phosphoserine. Thr209 is subject to Phosphothreonine. A compositionally biased stretch (basic and acidic residues) spans 254 to 285 (HTDDLNESRDSLPSKRSKNSKDHRVVSHHEDN). Polar residues-rich tracts occupy residues 302–324 (LFGSSSTTISATAPGGSSTGPSE), 356–369 (TTPAQQGSPQTPTK), and 377–388 (ATGSNNSNSLLK). The span at 560–578 (SGKKGAKRPIQRRRVRRKA) shows a compositional bias: basic residues. 2 C2H2-type zinc fingers span residues 610–638 (YRCTECAKENMQKTFKNKYSFQRHAFLYH) and 646–669 (FPCPVCSKEFSRPDKMKNHLKMTH). Ser682 is subject to Phosphoserine.

In terms of assembly, interacts with CoRest/CG33525, suggesting that it acts by recruiting a CoRest-containing corepressor complex. Interacts with phyl.

It localises to the nucleus. Functionally, binds to a number of sites in the transcriptional regulatory region of ftz. Isoform alpha is required to repress genes that promote the R7 cell fate. Probable repressor of the transcription of the segmentation genes ftz, eve, h, odd, run, and en. May bind to the region 5'-AGGG[CT]GG-3'. Degradation of ttk is directed by binding of sinah or sina, via the adapter molecule phyl which binds to the BTB domain of ttk. This chain is Protein tramtrack, alpha isoform (ttk), found in Drosophila melanogaster (Fruit fly).